Here is a 380-residue protein sequence, read N- to C-terminus: MKKSIGILSPGVALGTAGSAMSSKFFVMALAVFFSFAQVVIEANSWWSLGMNNPVQMSEVYIIGAQPLCSQLAGLSQGQKKLCHLYQDHMQYIGEGAKTGIKECQYQFRHRRWNCSTVDNTSVFGRVMQIGSRETAFTYAVSAAGVVNAMSRACREGELSTCGCSRAARPKDLPRDWLWGGCGDNIDYGYRFAKEFVDARERERIHAKGSYESARILMNLHNNEAGRRTVYNLADVACKCHGVSGSCSLKTCWLQLADFRKVGDALKEKYDSAAAMRLNSRGKLVQVNSRFNSPTTQDLVYIDPSPDYCVRNESTGSLGTQGRLCNKTSEGMDGCELMCCGRGYDQFKTVQTERCHCKFHWCCYVKCKKCTEIVDQFVCK.

A signal peptide spans 1 to 35 (MKKSIGILSPGVALGTAGSAMSSKFFVMALAVFFS). Positions 36 to 61 (FAQVVIEANSWWSLGMNNPVQMSEVY) are excised as a propeptide. An intrachain disulfide couples Cys-104 to Cys-115. Asn-114 and Asn-120 each carry an N-linked (GlcNAc...) asparagine glycan. Cystine bridges form between Cys-154/Cys-162, Cys-164/Cys-182, Cys-238/Cys-252, Cys-240/Cys-247, Cys-309/Cys-340, Cys-325/Cys-335, Cys-339/Cys-379, Cys-355/Cys-370, Cys-357/Cys-367, and Cys-362/Cys-363. Ser-244 is lipidated: O-palmitoleoyl serine; by PORCN. Residues Asn-312 and Asn-326 are each glycosylated (N-linked (GlcNAc...) asparagine).

The protein belongs to the Wnt family. In terms of assembly, forms a soluble 1:1 complex with AFM; this prevents oligomerization and is required for prolonged biological activity. The complex with AFM may represent the physiological form in body fluids. Homooligomer; disulfide-linked, leading to inactivation (in vitro). Interacts with PORCN. Interacts with WLS. Interacts with glypican GCP3. Interacts with PKD1 (via extracellular domain). Interacts with TMEM67. Glycosylation is necessary for secretion but not for activity. Post-translationally, palmitoleoylation is required for efficient binding to frizzled receptors. Depalmitoleoylation leads to Wnt signaling pathway inhibition. In terms of processing, proteolytic processing by TIKI1 and TIKI2 promotes oxidation and formation of large disulfide-bond oligomers, leading to inactivation of WNT5A.

It localises to the secreted. It is found in the extracellular space. Its subcellular location is the extracellular matrix. Ligand for members of the frizzled family of seven transmembrane receptors. Can activate or inhibit canonical Wnt signaling, depending on receptor context. In the presence of FZD4, activates beta-catenin signaling. In the presence of ROR2, inhibits the canonical Wnt pathway by promoting beta-catenin degradation through a GSK3-independent pathway which involves down-regulation of beta-catenin-induced reporter gene expression. Suppression of the canonical pathway allows chondrogenesis to occur. Inhibits tumor formation. Stimulates cell migration. Decreases proliferation, migration, invasiveness and clonogenicity of carcinoma cells and may act as a tumor suppressor. Mediates motility of melanoma cells. Required during embryogenesis for extension of the primary anterior-posterior axis and for outgrowth of limbs and the genital tubercle. Inhibits type II collagen expression in chondrocytes. The polypeptide is Protein Wnt-5a (Oryctolagus cuniculus (Rabbit)).